We begin with the raw amino-acid sequence, 537 residues long: Beta-1-syntrophin (537 aa).

Residue A2 is modified to N-acetylalanine. 2 PH domains span residues 18 to 297 (RAQR…SNAG) and 321 to 432 (EIRH…QGCH). Residues S86, S125, and S204 each carry the phosphoserine modification. Residues 111-194 (GVKVLKQELG…EVLLEVKYMR (84 aa)) form the PDZ domain. The tract at residues 204 to 233 (SPVSEIGWETPPPESPRLGGGSAEPLSSQS) is disordered. Position 213 is a phosphothreonine (T213). 5 positions are modified to phosphoserine: S218, S225, S231, S235, and S388. The SU domain maps to 481–537 (PYEKLKMSSDDGIRMLYLDFGGKEGEIQLDLHSCPKPIVFIIHSFLSAKITRLGLVA). Residues 517–537 (PIVFIIHSFLSAKITRLGLVA) form a calmodulin-binding region.

This sequence belongs to the syntrophin family. Monomer and homodimer. Interacts with the viral HTLV-1 TAX protein and other members of the syntrophin family: SNTA1 and SNTB2. Interacts with the dystrophin protein DMD and related proteins DTNA and UTRN and with the sodium channel proteins SCN4A and SCN5A. Interacts with DTNB. Phosphorylated by CaM-kinase II. Ubiquitous. Expressed at high levels in the liver.

It localises to the cell membrane. Its subcellular location is the sarcolemma. The protein resides in the cell junction. The protein localises to the cytoplasm. It is found in the cytoskeleton. In terms of biological role, adapter protein that binds to and probably organizes the subcellular localization of a variety of membrane proteins. May link various receptors to the actin cytoskeleton and the dystrophin glycoprotein complex. This chain is Beta-1-syntrophin (Sntb1), found in Mus musculus (Mouse).